The following is a 154-amino-acid chain: ATP synthase subunit b (154 aa).

The helical transmembrane segment at 5 to 27 threads the bilayer; it reads LLGQAIAFTLFVWFCMKYVWPPI.

Belongs to the ATPase B chain family. As to quaternary structure, F-type ATPases have 2 components, F(1) - the catalytic core - and F(0) - the membrane proton channel. F(1) has five subunits: alpha(3), beta(3), gamma(1), delta(1), epsilon(1). F(0) has three main subunits: a(1), b(2) and c(10-14). The alpha and beta chains form an alternating ring which encloses part of the gamma chain. F(1) is attached to F(0) by a central stalk formed by the gamma and epsilon chains, while a peripheral stalk is formed by the delta and b chains.

It is found in the cell inner membrane. F(1)F(0) ATP synthase produces ATP from ADP in the presence of a proton or sodium gradient. F-type ATPases consist of two structural domains, F(1) containing the extramembraneous catalytic core and F(0) containing the membrane proton channel, linked together by a central stalk and a peripheral stalk. During catalysis, ATP synthesis in the catalytic domain of F(1) is coupled via a rotary mechanism of the central stalk subunits to proton translocation. Functionally, component of the F(0) channel, it forms part of the peripheral stalk, linking F(1) to F(0). The protein is ATP synthase subunit b of Aliivibrio fischeri (strain ATCC 700601 / ES114) (Vibrio fischeri).